Consider the following 267-residue polypeptide: MNTWLNLKDNVIIVTGGASGIGLAIVDELLSQGAHVQMIDIHGGDRHHNGDNYHFWSTDISSATEVQQTIDAIIQRWSRIDGLVNNAGVNFPRLLVDEKAPAGRYELNEAAFEKMVNINQKGVFFMSQAVARQMVKQRAGVIVNVSSESGLEGSEGQSCYAATKAALNSFTRSWSKELGKYGIRVVGVAPGILEKTGLRTPEYEEALAWTRNITVEQLREGYTKNAIPIGRAGKLSEVADFVCYLLSARASYITGVTTNIAGGKTRG.

9–38 provides a ligand contact to NAD(+); sequence DNVIIVTGGASGIGLAIVDELLSQGAHVQM. Ser-147 contacts substrate. Residue Tyr-160 is the Proton acceptor of the active site.

This sequence belongs to the short-chain dehydrogenases/reductases (SDR) family. Homotetramer.

It carries out the reaction D-sorbitol 6-phosphate + NAD(+) = beta-D-fructose 6-phosphate + NADH + H(+). The protein operates within carbohydrate metabolism; D-sorbitol degradation; D-fructose 6-phosphate from D-sorbitol 6-phosphate: step 1/1. The sequence is that of Sorbitol-6-phosphate 2-dehydrogenase (sorD) from Klebsiella pneumoniae.